The following is a 1508-amino-acid chain: DNA-directed RNA polymerase subunit beta' (1508 aa).

Zn(2+) contacts are provided by C71, C73, C86, and C89. Mg(2+) contacts are provided by D470, D472, and D474. 4 residues coordinate Zn(2+): C804, C878, C885, and C888.

Belongs to the RNA polymerase beta' chain family. As to quaternary structure, the RNAP catalytic core consists of 2 alpha, 1 beta, 1 beta' and 1 omega subunit. When a sigma factor is associated with the core the holoenzyme is formed, which can initiate transcription. Mg(2+) is required as a cofactor. Requires Zn(2+) as cofactor.

The catalysed reaction is RNA(n) + a ribonucleoside 5'-triphosphate = RNA(n+1) + diphosphate. DNA-dependent RNA polymerase catalyzes the transcription of DNA into RNA using the four ribonucleoside triphosphates as substrates. This Campylobacter fetus subsp. fetus (strain 82-40) protein is DNA-directed RNA polymerase subunit beta'.